Consider the following 615-residue polypeptide: Elongation factor 4 (615 aa).

Residues 17–198 (ASIRNFCIIA…RVSRTIPAPV (182 aa)) form the tr-type G domain. GTP is bound by residues 29-34 (DHGKST) and 145-148 (NKID).

This sequence belongs to the TRAFAC class translation factor GTPase superfamily. Classic translation factor GTPase family. LepA subfamily.

It localises to the cell membrane. It carries out the reaction GTP + H2O = GDP + phosphate + H(+). Its function is as follows. Required for accurate and efficient protein synthesis under certain stress conditions. May act as a fidelity factor of the translation reaction, by catalyzing a one-codon backward translocation of tRNAs on improperly translocated ribosomes. Back-translocation proceeds from a post-translocation (POST) complex to a pre-translocation (PRE) complex, thus giving elongation factor G a second chance to translocate the tRNAs correctly. Binds to ribosomes in a GTP-dependent manner. The sequence is that of Elongation factor 4 from Clavibacter sepedonicus (Clavibacter michiganensis subsp. sepedonicus).